An 82-amino-acid polypeptide reads, in one-letter code: Small ribosomal subunit protein bS16 (82 aa).

Belongs to the bacterial ribosomal protein bS16 family.

The chain is Small ribosomal subunit protein bS16 from Marinomonas sp. (strain MWYL1).